The primary structure comprises 416 residues: Elongation factor 1-gamma 3 (416 aa).

Residues 1-82 form the GST N-terminal domain; the sequence is MALVLHCGSG…YVARLKDNSS (82 aa). Residues 87–215 form the GST C-terminal domain; that stretch reads SLIDYSHIEQ…FKQAESVPPV (129 aa). Positions 213–263 are disordered; it reads PPVQKKAAPPKESKAKEAKKEAPKEAPKPKVEASEEEEAPKPKPKNPLDLL. Residues 221–245 show a composition bias toward basic and acidic residues; it reads PPKESKAKEAKKEAPKEAPKPKVEA. Residues 256–416 form the EF-1-gamma C-terminal domain; that stretch reads PKNPLDLLPP…EDLLDAKCFK (161 aa).

In terms of assembly, EF-1 is composed of four subunits: alpha, beta, delta, and gamma.

Its function is as follows. Probably plays a role in anchoring the complex to other cellular components. This Oryza sativa subsp. japonica (Rice) protein is Elongation factor 1-gamma 3.